The chain runs to 125 residues: Mini-ribonuclease 3 (125 aa).

Residue Asp11 is part of the active site.

The protein belongs to the MrnC RNase family. As to quaternary structure, homodimer. Mg(2+) serves as cofactor.

Its subcellular location is the cytoplasm. In terms of biological role, involved in correct processing of both the 5' and 3' ends of 23S rRNA precursor. Processes 30S rRNA precursor transcript even in absence of ribonuclease 3 (Rnc); Rnc processes 30S rRNA into smaller rRNA precursors. This Acholeplasma laidlawii (strain PG-8A) protein is Mini-ribonuclease 3.